A 77-amino-acid polypeptide reads, in one-letter code: uncharacterized protein (77 aa).

A helical membrane pass occupies residues Phe36–Val52.

The protein localises to the membrane. This is an uncharacterized protein from Saccharomyces cerevisiae (strain ATCC 204508 / S288c) (Baker's yeast).